Consider the following 457-residue polypeptide: MSNSAKSVVILAAGKGTRMYSQLPKVLHKLAGKSMVQHVIDTAKSLGAQQTHLVYGHGGELMKETLGSQPVNWVLQAEQLGTGHAMQQAAPFFADDEDILMLYGDVPLITKETLERLIAVKPAGGIGLLTVILDNPMGYGRIVRENGDVVGIVEQKDASEEQLKIKEINTGILVANGGDLKRWLAKLDNNNAQKEYYITDIIALAHQEGRKIETAHPTRHSEMEGVNNRLQLAALERIYQTEQAERLLLEGVMLLDPARFDLRGTLTHGKDVVIDTNVIIEGEVTLGNNVEIGTGCVLKNCVIGDGSIISPYTVIEDANLAQECTVGPFARLRPGAQLADKAHVGNFVEMKKASLGVGSKAGHLTYLGDTEVGANVNIGAGTITCNYDGANKFKTIIGDDVFIGSDTQLVAPVCVANGATIGAGTTLTKDVNENELVISRVKQTHISGWKRPVKKKQ.

Residues 1–229 are pyrophosphorylase; that stretch reads MSNSAKSVVI…HSEMEGVNNR (229 aa). UDP-N-acetyl-alpha-D-glucosamine contacts are provided by residues 11–14, Lys-25, Gln-76, 81–82, 103–105, Gly-140, Glu-154, Asn-169, and Asn-227; these read LAAG, GT, and YGD. Mg(2+) is bound at residue Asp-105. Asn-227 serves as a coordination point for Mg(2+). Residues 230–250 form a linker region; the sequence is LQLAALERIYQTEQAERLLLE. Positions 251–457 are N-acetyltransferase; sequence GVMLLDPARF…GWKRPVKKKQ (207 aa). Residues Arg-333 and Lys-351 each coordinate UDP-N-acetyl-alpha-D-glucosamine. Residue His-363 is the Proton acceptor of the active site. UDP-N-acetyl-alpha-D-glucosamine is bound by residues Tyr-366 and Asn-377. Residues Ala-380, 386-387, Ser-405, Ala-423, and Arg-440 each bind acetyl-CoA; that span reads NY.

It in the N-terminal section; belongs to the N-acetylglucosamine-1-phosphate uridyltransferase family. The protein in the C-terminal section; belongs to the transferase hexapeptide repeat family. Homotrimer. Mg(2+) serves as cofactor.

The protein resides in the cytoplasm. It catalyses the reaction alpha-D-glucosamine 1-phosphate + acetyl-CoA = N-acetyl-alpha-D-glucosamine 1-phosphate + CoA + H(+). The catalysed reaction is N-acetyl-alpha-D-glucosamine 1-phosphate + UTP + H(+) = UDP-N-acetyl-alpha-D-glucosamine + diphosphate. The protein operates within nucleotide-sugar biosynthesis; UDP-N-acetyl-alpha-D-glucosamine biosynthesis; N-acetyl-alpha-D-glucosamine 1-phosphate from alpha-D-glucosamine 6-phosphate (route II): step 2/2. It participates in nucleotide-sugar biosynthesis; UDP-N-acetyl-alpha-D-glucosamine biosynthesis; UDP-N-acetyl-alpha-D-glucosamine from N-acetyl-alpha-D-glucosamine 1-phosphate: step 1/1. Its pathway is bacterial outer membrane biogenesis; LPS lipid A biosynthesis. Catalyzes the last two sequential reactions in the de novo biosynthetic pathway for UDP-N-acetylglucosamine (UDP-GlcNAc). The C-terminal domain catalyzes the transfer of acetyl group from acetyl coenzyme A to glucosamine-1-phosphate (GlcN-1-P) to produce N-acetylglucosamine-1-phosphate (GlcNAc-1-P), which is converted into UDP-GlcNAc by the transfer of uridine 5-monophosphate (from uridine 5-triphosphate), a reaction catalyzed by the N-terminal domain. The sequence is that of Bifunctional protein GlmU from Proteus mirabilis (strain HI4320).